The sequence spans 220 residues: Pyrrolidone-carboxylate peptidase 1 (220 aa).

Active-site residues include Glu-80, Cys-143, and His-172.

This sequence belongs to the peptidase C15 family. As to quaternary structure, homotetramer.

The protein localises to the cytoplasm. It catalyses the reaction Release of an N-terminal pyroglutamyl group from a polypeptide, the second amino acid generally not being Pro.. Functionally, removes 5-oxoproline from various penultimate amino acid residues except L-proline. In Photorhabdus laumondii subsp. laumondii (strain DSM 15139 / CIP 105565 / TT01) (Photorhabdus luminescens subsp. laumondii), this protein is Pyrrolidone-carboxylate peptidase 1.